The following is a 134-amino-acid chain: Translation initiation factor 2 subunit beta (134 aa).

The span at 1–12 (MGYEEQLDRALE) shows a compositional bias: basic and acidic residues. Residues 1 to 32 (MGYEEQLDRALEETPDIEGTAARFSVPDPDVR) form a disordered region.

It belongs to the eIF-2-beta/eIF-5 family. In terms of assembly, heterotrimer composed of an alpha, a beta and a gamma chain.

Functionally, eIF-2 functions in the early steps of protein synthesis by forming a ternary complex with GTP and initiator tRNA. This is Translation initiation factor 2 subunit beta from Natronomonas pharaonis (strain ATCC 35678 / DSM 2160 / CIP 103997 / JCM 8858 / NBRC 14720 / NCIMB 2260 / Gabara) (Halobacterium pharaonis).